An 84-amino-acid polypeptide reads, in one-letter code: Replication regulatory protein repA2 (84 aa).

Polar residues predominate over residues 1–13; sequence MSQTENAVTSSSG. Positions 1 to 31 are disordered; it reads MSQTENAVTSSSGAKRAYRKGNPLSDAEKQR.

In terms of biological role, this protein is involved in the determination of copy number in gene replication. It binds to the repA promoter thus inhibiting the synthesis of the mRNA for the initiator protein RepA. The protein is Replication regulatory protein repA2 (repA2) of Escherichia coli.